Here is a 607-residue protein sequence, read N- to C-terminus: Karyogamy meiotic segregation protein 1 (607 aa).

A disordered region spans residues 83-135; the sequence is DDSFANQAEKPSMEQQNSKNSIKEDANEHSVNSAHSKSSSNASPESLNPSQMM. Over residues 111–132 the composition is skewed to low complexity; the sequence is HSVNSAHSKSSSNASPESLNPS.

Interacts with mcp1 and sad1.

It is found in the cytoplasm. The protein resides in the cytoskeleton. It localises to the microtubule organizing center. Its subcellular location is the spindle pole body. In terms of biological role, has a role in karyogamy, recombination and segregation during meiosis. Although it has been shown to associate with the spindle pole body it is unlikely to be involved in its formation or maintenance. This chain is Karyogamy meiotic segregation protein 1 (kms1), found in Schizosaccharomyces pombe (strain 972 / ATCC 24843) (Fission yeast).